The following is an 84-amino-acid chain: Large ribosomal subunit protein bL27 (84 aa).

Positions 1-25 (MAHKKAGGSSKNGRDSAGKRLGVKR) are disordered.

This sequence belongs to the bacterial ribosomal protein bL27 family.

This chain is Large ribosomal subunit protein bL27, found in Syntrophotalea carbinolica (strain DSM 2380 / NBRC 103641 / GraBd1) (Pelobacter carbinolicus).